The chain runs to 147 residues: Prefoldin subunit alpha (147 aa).

Belongs to the prefoldin alpha subunit family. As to quaternary structure, heterohexamer of two alpha and four beta subunits.

Its subcellular location is the cytoplasm. In terms of biological role, molecular chaperone capable of stabilizing a range of proteins. Seems to fulfill an ATP-independent, HSP70-like function in archaeal de novo protein folding. The polypeptide is Prefoldin subunit alpha (Saccharolobus islandicus (strain L.S.2.15 / Lassen #1) (Sulfolobus islandicus)).